We begin with the raw amino-acid sequence, 430 residues long: Adenylosuccinate synthetase (430 aa).

GTP-binding positions include 13-19 (GDEGKGK) and 41-43 (GHT). The Proton acceptor role is filled by Asp14. Residues Asp14 and Gly41 each contribute to the Mg(2+) site. IMP contacts are provided by residues 14–17 (DEGK), 39–42 (NAGH), Thr130, Arg144, Gln225, Thr240, and Arg304. The active-site Proton donor is His42. A substrate-binding site is contributed by 300-306 (STTGRAR). GTP contacts are provided by residues Arg306, 332–334 (KLD), and 414–416 (STG).

This sequence belongs to the adenylosuccinate synthetase family. Homodimer. The cofactor is Mg(2+).

It localises to the cytoplasm. The enzyme catalyses IMP + L-aspartate + GTP = N(6)-(1,2-dicarboxyethyl)-AMP + GDP + phosphate + 2 H(+). The protein operates within purine metabolism; AMP biosynthesis via de novo pathway; AMP from IMP: step 1/2. Plays an important role in the de novo pathway of purine nucleotide biosynthesis. Catalyzes the first committed step in the biosynthesis of AMP from IMP. This is Adenylosuccinate synthetase from Thioalkalivibrio sulfidiphilus (strain HL-EbGR7).